Here is an 86-residue protein sequence, read N- to C-terminus: Exodeoxyribonuclease 7 small subunit (86 aa).

Positions 1–26 (MQDELFETEKIPPKNTKNTKNAPKKS) are disordered.

It belongs to the XseB family. Heterooligomer composed of large and small subunits.

Its subcellular location is the cytoplasm. The catalysed reaction is Exonucleolytic cleavage in either 5'- to 3'- or 3'- to 5'-direction to yield nucleoside 5'-phosphates.. Bidirectionally degrades single-stranded DNA into large acid-insoluble oligonucleotides, which are then degraded further into small acid-soluble oligonucleotides. This Helicobacter pylori (strain ATCC 700392 / 26695) (Campylobacter pylori) protein is Exodeoxyribonuclease 7 small subunit.